Consider the following 455-residue polypeptide: Serine--tRNA ligase (455 aa).

Residue 252 to 254 (TAE) coordinates L-serine. ATP contacts are provided by residues 283-285 (RKE) and Val-299. Glu-306 lines the L-serine pocket. 370–373 (EVVS) provides a ligand contact to ATP. Position 406 (Thr-406) interacts with L-serine.

Belongs to the class-II aminoacyl-tRNA synthetase family. Type-1 seryl-tRNA synthetase subfamily. Homodimer. The tRNA molecule binds across the dimer.

The protein localises to the cytoplasm. It catalyses the reaction tRNA(Ser) + L-serine + ATP = L-seryl-tRNA(Ser) + AMP + diphosphate + H(+). The enzyme catalyses tRNA(Sec) + L-serine + ATP = L-seryl-tRNA(Sec) + AMP + diphosphate + H(+). It participates in aminoacyl-tRNA biosynthesis; selenocysteinyl-tRNA(Sec) biosynthesis; L-seryl-tRNA(Sec) from L-serine and tRNA(Sec): step 1/1. Its function is as follows. Catalyzes the attachment of serine to tRNA(Ser). Is also able to aminoacylate tRNA(Sec) with serine, to form the misacylated tRNA L-seryl-tRNA(Sec), which will be further converted into selenocysteinyl-tRNA(Sec). This is Serine--tRNA ligase from Pyrococcus furiosus (strain ATCC 43587 / DSM 3638 / JCM 8422 / Vc1).